A 164-amino-acid polypeptide reads, in one-letter code: Putative deoxyuridine 5'-triphosphate nucleotidohydrolase (164 aa).

65–67 (RSG) lines the substrate pocket. Lys71 is modified (N6-acetyllysine; by host). Residues 79–82 (GVVD), Gly90, and 138–139 (YG) each bind substrate.

This sequence belongs to the dUTPase family. It depends on Mg(2+) as a cofactor.

It carries out the reaction dUTP + H2O = dUMP + diphosphate + H(+). Functionally, this enzyme is involved in nucleotide metabolism: it produces dUMP, the immediate precursor of thymidine nucleotides and it decreases the intracellular concentration of dUTP so that uracil cannot be incorporated into DNA. The chain is Putative deoxyuridine 5'-triphosphate nucleotidohydrolase from Dryophytes versicolor (chameleon treefrog).